Here is a 183-residue protein sequence, read N- to C-terminus: UPF0397 protein stu0306/stu0307 (183 aa).

Helical transmembrane passes span 11–31 (ATGIGAALFIIICIFVNIPIF), 44–64 (VLFSVIFGSRSIIGFFMGFIG), 74–94 (GDISWAWVLASGITGLVIGLF), 111–131 (IWFNLAQALGLLIAYGVVTPI), and 149–169 (FVAGVANFITIAIGGTLLLAI).

Belongs to the UPF0397 family.

The protein localises to the cell membrane. This Streptococcus thermophilus (strain ATCC BAA-250 / LMG 18311) protein is UPF0397 protein stu0306/stu0307.